The primary structure comprises 239 residues: LexA repressor (239 aa).

Residues 26 to 46 constitute a DNA-binding region (H-T-H motif); the sequence is FDEMKDALDLASKSGIHRLIT. Residues 80–108 are disordered; the sequence is RRGFSPSVIEGSLGKPQPAAAPAPAKPVA. Residues serine 159 and lysine 197 each act as for autocatalytic cleavage activity in the active site.

This sequence belongs to the peptidase S24 family. Homodimer.

It catalyses the reaction Hydrolysis of Ala-|-Gly bond in repressor LexA.. In terms of biological role, represses a number of genes involved in the response to DNA damage (SOS response), including recA and lexA. In the presence of single-stranded DNA, RecA interacts with LexA causing an autocatalytic cleavage which disrupts the DNA-binding part of LexA, leading to derepression of the SOS regulon and eventually DNA repair. The sequence is that of LexA repressor from Rhizobium leguminosarum bv. trifolii (strain WSM2304).